The primary structure comprises 425 residues: Serine--tRNA ligase (425 aa).

Residue Thr-233–Glu-235 participates in L-serine binding. Arg-264–Glu-266 contacts ATP. Glu-287 contacts L-serine. Glu-351–Ser-354 contacts ATP. Ser-385 is an L-serine binding site.

It belongs to the class-II aminoacyl-tRNA synthetase family. Type-1 seryl-tRNA synthetase subfamily. As to quaternary structure, homodimer. The tRNA molecule binds across the dimer.

The protein resides in the cytoplasm. It catalyses the reaction tRNA(Ser) + L-serine + ATP = L-seryl-tRNA(Ser) + AMP + diphosphate + H(+). It carries out the reaction tRNA(Sec) + L-serine + ATP = L-seryl-tRNA(Sec) + AMP + diphosphate + H(+). The protein operates within aminoacyl-tRNA biosynthesis; selenocysteinyl-tRNA(Sec) biosynthesis; L-seryl-tRNA(Sec) from L-serine and tRNA(Sec): step 1/1. Catalyzes the attachment of serine to tRNA(Ser). Is also able to aminoacylate tRNA(Sec) with serine, to form the misacylated tRNA L-seryl-tRNA(Sec), which will be further converted into selenocysteinyl-tRNA(Sec). The chain is Serine--tRNA ligase from Synechococcus sp. (strain WH7803).